The chain runs to 658 residues: tRNA 5-methylaminomethyl-2-thiouridine biosynthesis bifunctional protein MnmC (658 aa).

The segment at 1–236 (MIPELPHAQL…KWEVLRGEFL (236 aa)) is tRNA (mnm(5)s(2)U34)-methyltransferase. Residues 265–658 (IGGGLAGCAS…ALRRLIRGKA (394 aa)) form an FAD-dependent cmnm(5)s(2)U34 oxidoreductase region.

In the N-terminal section; belongs to the methyltransferase superfamily. tRNA (mnm(5)s(2)U34)-methyltransferase family. This sequence in the C-terminal section; belongs to the DAO family. FAD is required as a cofactor.

Its subcellular location is the cytoplasm. It carries out the reaction 5-aminomethyl-2-thiouridine(34) in tRNA + S-adenosyl-L-methionine = 5-methylaminomethyl-2-thiouridine(34) in tRNA + S-adenosyl-L-homocysteine + H(+). Its function is as follows. Catalyzes the last two steps in the biosynthesis of 5-methylaminomethyl-2-thiouridine (mnm(5)s(2)U) at the wobble position (U34) in tRNA. Catalyzes the FAD-dependent demodification of cmnm(5)s(2)U34 to nm(5)s(2)U34, followed by the transfer of a methyl group from S-adenosyl-L-methionine to nm(5)s(2)U34, to form mnm(5)s(2)U34. This chain is tRNA 5-methylaminomethyl-2-thiouridine biosynthesis bifunctional protein MnmC, found in Pseudomonas fluorescens (strain ATCC BAA-477 / NRRL B-23932 / Pf-5).